The following is a 364-amino-acid chain: WAT1-related protein At5g47470 (364 aa).

Transmembrane regions (helical) follow at residues 28 to 48, 59 to 79, 93 to 113, 124 to 144, 158 to 178, 197 to 217, 228 to 248, 255 to 275, 293 to 313, and 319 to 339; these read MVIV…SLLM, FTIV…FAIL, LIGK…SLFL, ATAM…IVGL, ILGT…HSTS, VVGC…VVLQ, ISLS…VLLL, VLAS…LAGA, PVFV…FAVL, and VSLG…LVLW. One can recognise an EamA 1 domain in the interval 40-172; that stretch reads VYAGNSLLMS…LCVFGALAMS (133 aa). The region spanning 219–338 is the EamA 2 domain; sequence STLAEFPAPI…LMFVGLYLVL (120 aa).

This sequence belongs to the drug/metabolite transporter (DMT) superfamily. Plant drug/metabolite exporter (P-DME) (TC 2.A.7.4) family.

It localises to the membrane. The polypeptide is WAT1-related protein At5g47470 (Arabidopsis thaliana (Mouse-ear cress)).